A 1009-amino-acid chain; its full sequence is Protein naked cuticle (1009 aa).

2 stretches are compositionally biased toward polar residues: residues 68–83 and 121–130; these read IITTPPGNASGSASNK and LPQDMSSSGS. The tract at residues 68-166 is disordered; that stretch reads IITTPPGNAS…QQQTAAAATG (99 aa). Low complexity predominate over residues 152–166; it reads QQQQQQQQTAAAATG. The tract at residues 206–282 is interaction with dsh; the sequence is EFTCDVSVEG…TVSPEGKSKS (77 aa). The EF-hand domain occupies 217-253; the sequence is KSSQPLQFSFTFYDLDGHHGKITKDDIVGIVYTIYES. 3 disordered regions span residues 328–433, 456–479, and 515–580; these read MSKQ…QQQL, AGNEATVPDCPSSHRQLHHQRQQD, and GNDS…QQQR. A compositionally biased stretch (basic residues) spans 349 to 359; that stretch reads RRQHRYRPRKL. Residues 370–387 show a composition bias toward basic and acidic residues; that stretch reads NSEKEKERERERERESHA. The span at 403-414 shows a compositional bias: basic residues; that stretch reads KSHHHHHHHGRY. Residues 515 to 525 show a composition bias toward polar residues; the sequence is GNDSGNWQNRH. Low complexity-rich tracts occupy residues 526 to 535 and 570 to 580; these read LQQSLQQQPQ and HQQLQQQQQQR. The interval 584-613 is required for nuclear localization and inhibition of Wnt signaling; it reads ECWKSALNRNDLISIIRESMEKNRLCFQLN. Disordered regions lie at residues 619-662, 773-799, 835-899, and 955-982; these read NVSP…SPLS, SAAHSPPPTPSNVATVQPIPKKSHNQK, LQQK…SAGS, and TESGGKQQQQQALEADEGQEQEVELDTS. Composition is skewed to low complexity over residues 624–638 and 653–662; these read RQPAAQQQQQQQRQR and SPAAPQSPLS. Residues 843-857 show a composition bias toward basic residues; the sequence is RRHRHKQQQQQHHHQ. Low complexity predominate over residues 858–875; sequence QQQQQQQQQNQQQQQQQQ. Acidic residues predominate over residues 968–979; that stretch reads EADEGQEQEVEL.

The protein belongs to the NKD family. Interacts with dsh.

Its subcellular location is the cell membrane. The protein localises to the cytoplasm. It is found in the nucleus. Functionally, cell autonomous antagonist of the canonical Wnt signaling pathway. May activate a second Wnt signaling pathway that controls planar cell polarity. Required for neuroblast specification. In Drosophila pseudoobscura pseudoobscura (Fruit fly), this protein is Protein naked cuticle.